A 720-amino-acid polypeptide reads, in one-letter code: Connector enhancer of kinase suppressor of ras 1 (720 aa).

An SAM domain is found at 7-70; that stretch reads WTPGKVATWL…LGGVEQLQAL (64 aa). Residues 78–164 form the CRIC domain; the sequence is NLQSLTEGLL…QVLHEDGPAA (87 aa). The 90-residue stretch at 196 to 285 folds into the PDZ domain; sequence KAVLEQVQLD…GLSLVLKKIP (90 aa). The interval 285 to 390 is disordered; the sequence is PIPETPPQTP…RKKSKGLATR (106 aa). Low complexity predominate over residues 304–317; the sequence is RSPSLSLAPLSPRA. Phosphoserine is present on residues Ser307 and Ser314. The segment covering 348 to 359 has biased composition (pro residues); sequence EPLPIPPEPPAI. A compositionally biased stretch (basic residues) spans 379-390; it reads VGRKKSKGLATR. In terms of domain architecture, PH spans 403–502; that stretch reads RPDCDGWLLL…WVRHLITCIS (100 aa). The segment at 504-573 is disordered; that stretch reads YQSPGRAPPP…TSFGSLTDSS (70 aa). Residues 518–530 show a composition bias toward acidic residues; it reads CYSETEAEDPDDE. Residues 533–546 show a composition bias toward low complexity; sequence SHSASPSPAQAGSP. Polar residues predominate over residues 553–571; sequence PAATPTQRSPRTSFGSLTD. The stretch at 615 to 646 forms a coiled coil; it reads QLNERVHRVRALQSTLKAKLQELQVLEEVLGD. The tract at residues 676–720 is disordered; it reads QAEGSSHILTSDSTEQSPHSLPSDPEEHSHLCPLTSESSLRPPDL. Polar residues predominate over residues 678 to 695; sequence EGSSHILTSDSTEQSPHS.

The protein belongs to the CNKSR family. As to quaternary structure, interacts with RHO and RALGDS. In terms of processing, phosphorylated on tyrosine.

It is found in the cytoplasm. Its subcellular location is the membrane. Its function is as follows. May function as an adapter protein or regulator of Ras signaling pathways. The protein is Connector enhancer of kinase suppressor of ras 1 (CNKSR1) of Homo sapiens (Human).